A 206-amino-acid polypeptide reads, in one-letter code: Small ribosomal subunit protein uS5 (206 aa).

Polar residues predominate over residues 1–15 (MTDTPTKQEIQSKND). A disordered region spans residues 1-50 (MTDTPTKQEIQSKNDNVPGATPVEQKKNNRNDRKRNRRGDSKNLERDSDW). A compositionally biased stretch (basic and acidic residues) spans 38-50 (RGDSKNLERDSDW). The region spanning 50–113 (WQERVVQIRR…SDGKKNLVRV (64 aa)) is the S5 DRBM domain.

This sequence belongs to the universal ribosomal protein uS5 family. Part of the 30S ribosomal subunit. Contacts proteins S4 and S8.

Functionally, with S4 and S12 plays an important role in translational accuracy. In terms of biological role, located at the back of the 30S subunit body where it stabilizes the conformation of the head with respect to the body. The protein is Small ribosomal subunit protein uS5 of Prochlorococcus marinus (strain MIT 9301).